An 84-amino-acid polypeptide reads, in one-letter code: Glutaredoxin (84 aa).

Residues 1–84 (MPPVVIYTTA…AGKLDALLSA (84 aa)) enclose the Glutaredoxin domain. The cysteines at positions 12 and 15 are disulfide-linked.

Belongs to the glutaredoxin family. In terms of assembly, monomer.

It localises to the cytoplasm. In terms of biological role, has a glutathione-disulfide oxidoreductase activity in the presence of NADPH and glutathione reductase. Reduces low molecular weight disulfides and proteins. This Pseudomonas aeruginosa (strain ATCC 15692 / DSM 22644 / CIP 104116 / JCM 14847 / LMG 12228 / 1C / PRS 101 / PAO1) protein is Glutaredoxin (grx).